Here is a 512-residue protein sequence, read N- to C-terminus: Differentially expressed in FDCP 8 homolog (512 aa).

The residue at position 1 (Met-1) is an N-acetylmethionine. The disordered stretch occupies residues 77–116; it reads NPFNKQSGPRQHEQGPGEEVPDVTPEEALPELPPGEPEFR. Over residues 95-105 the composition is skewed to acidic residues; it reads EVPDVTPEEAL. Phorbol-ester/DAG-type zinc fingers lie at residues 199-250 and 429-489; these read EHRF…SKPC and IHTL…STTC. At Ser-501 the chain carries Phosphoserine.

It belongs to the DEF8 family. Interacts (via C-terminus) with PLEKHM1; this interaction is weak but increased in a RAB7A-dependent manner.

Functionally, positively regulates lysosome peripheral distribution and ruffled border formation in osteoclasts. Involved in bone resorption. The polypeptide is Differentially expressed in FDCP 8 homolog (DEF8) (Homo sapiens (Human)).